Here is a 275-residue protein sequence, read N- to C-terminus: Translation initiation factor 2 subunit alpha (275 aa).

Residues 12 to 83 (GEFVVATVKN…EKGHIDLSLK (72 aa)) form the S1 motif domain.

It belongs to the eIF-2-alpha family. As to quaternary structure, heterotrimer composed of an alpha, a beta and a gamma chain.

In terms of biological role, eIF-2 functions in the early steps of protein synthesis by forming a ternary complex with GTP and initiator tRNA. This is Translation initiation factor 2 subunit alpha from Thermococcus kodakarensis (strain ATCC BAA-918 / JCM 12380 / KOD1) (Pyrococcus kodakaraensis (strain KOD1)).